The chain runs to 262 residues: Serine/arginine-rich splicing factor 10 (262 aa).

Residues 10–88 (TSLFVRNVAD…RQIEIQFAQG (79 aa)) form the RRM domain. Ser-23, Ser-106, and Ser-108 each carry phosphoserine. Over residues 116-126 (YRRSRSRSYER) the composition is skewed to basic and acidic residues. Residues 116–262 (YRRSRSRSYE…SWTSPKSSGH (147 aa)) form a disordered region. Phosphoserine is present on residues Ser-129, Ser-131, and Ser-133. Residues 134 to 150 (FDYNYRRSYSPRNSRPT) show a composition bias toward low complexity. Phosphoserine is present on residues Ser-158, Ser-160, and Arg-168. 2 stretches are compositionally biased toward basic residues: residues 165 to 186 (FKHRNRSFSRSKSNSRSRSKSQ) and 194 to 207 (KSRSRSASHTKTRG). A compositionally biased stretch (basic and acidic residues) spans 209–234 (SKTDSKTHYKSGSRYEKESRKKEPPR). The segment covering 252–262 (RSWTSPKSSGH) has biased composition (low complexity).

It belongs to the splicing factor SR family. In terms of assembly, the phosphorylated but not the dephosphorylated form interacts with TRA2B/SFRS10. The dephosphorylated form interacts with SNRNP70. Isoform 1 interacts with FUS C-terminus. Isoform 3 interacts with FUS C-terminus. Interacts with YTHDC1, leading to inhibit RNA-binding activity of SRSF10. Phosphorylated. Fully dephosphorylated in mitosis and partially dephosphorylated on heat shock. In terms of tissue distribution, widely expressed.

It is found in the nucleus speckle. The protein localises to the cytoplasm. Splicing factor that in its dephosphorylated form acts as a general repressor of pre-mRNA splicing. Seems to interfere with the U1 snRNP 5'-splice recognition of SNRNP70. Required for splicing repression in M-phase cells and after heat shock. Also acts as a splicing factor that specifically promotes exon skipping during alternative splicing. Interaction with YTHDC1, a RNA-binding protein that recognizes and binds N6-methyladenosine (m6A)-containing RNAs, prevents SRSF10 from binding to its mRNA-binding sites close to m6A-containing regions, leading to inhibit exon skipping during alternative splicing. May be involved in regulation of alternative splicing in neurons, with isoform 1 acting as a positive and isoform 3 as a negative regulator. This is Serine/arginine-rich splicing factor 10 (SRSF10) from Homo sapiens (Human).